Consider the following 399-residue polypeptide: Elongation factor Tu (399 aa).

A tr-type G domain is found at 10 to 204 (KPHVNIGTIG…AVDASIPEPE (195 aa)). Residues 19–26 (GHVDHGKT) form a G1 region. 19 to 26 (GHVDHGKT) serves as a coordination point for GTP. Thr-26 is a Mg(2+) binding site. The G2 stretch occupies residues 60-64 (GITIN). The segment at 81 to 84 (DCPG) is G3. GTP-binding positions include 81–85 (DCPGH) and 136–139 (NKCD). Residues 136–139 (NKCD) are G4. Positions 174–176 (SGL) are G5.

The protein belongs to the TRAFAC class translation factor GTPase superfamily. Classic translation factor GTPase family. EF-Tu/EF-1A subfamily. As to quaternary structure, monomer.

The protein resides in the cytoplasm. It catalyses the reaction GTP + H2O = GDP + phosphate + H(+). Its function is as follows. GTP hydrolase that promotes the GTP-dependent binding of aminoacyl-tRNA to the A-site of ribosomes during protein biosynthesis. The polypeptide is Elongation factor Tu (Synechococcus sp. (strain CC9311)).